The sequence spans 31 residues: Basic phospholipase A2 13 (31 aa).

It belongs to the phospholipase A2 family. Group I subfamily. Ca(2+) is required as a cofactor. Expressed by the venom gland.

It is found in the secreted. It carries out the reaction a 1,2-diacyl-sn-glycero-3-phosphocholine + H2O = a 1-acyl-sn-glycero-3-phosphocholine + a fatty acid + H(+). Snake venom phospholipase A2 (PLA2) that inhibits neuromuscular transmission by blocking acetylcholine release from the nerve termini. PLA2 catalyzes the calcium-dependent hydrolysis of the 2-acyl groups in 3-sn-phosphoglycerides. The polypeptide is Basic phospholipase A2 13 (Bungarus fasciatus (Banded krait)).